We begin with the raw amino-acid sequence, 290 residues long: MRLPVLGKDTVRMRDPEGLQDKITRIQRGGQEKLQIISDFDMTLSRFSRNGERCPTCYNIIDNSNIISDEGRKKLKCLFDIYYPLEIDPKKSIEEKYPLMVEWWSKAHDLFYEQRIQKDRLAQVVKESQATLRDGYDLFFNSLYQREIPLFIFSAGIGDVLEEIIRQAGVFHPNTKVVSNYMDFDDNGILTGFKGDLIHTYNKNSSVLKDTEYFKEISHRTNILLLGDTLGDLTMADGVSTVENIIKIGFLNDKVEELTEQFLQSYDIVLLRDETLDVVNGILQFVTAKN.

Aspartate 39 acts as the Nucleophile in catalysis. Mg(2+)-binding residues include aspartate 39 and aspartate 41. The Proton donor role is filled by aspartate 41. Position 86 (glutamate 86) interacts with CMP. Residue glutamate 86 participates in N(7)-methyl-GMP binding. Substrate contacts are provided by residues 154-155 (SA) and lysine 203. Aspartate 228 is a binding site for Mg(2+).

This sequence belongs to the pyrimidine 5'-nucleotidase family. As to quaternary structure, monomer.

The protein localises to the cytoplasm. It carries out the reaction N(7)-methyl-GMP + H2O = N(7)-methylguanosine + phosphate. The enzyme catalyses CMP + H2O = cytidine + phosphate. It catalyses the reaction a ribonucleoside 5'-phosphate + H2O = a ribonucleoside + phosphate. In terms of biological role, specifically hydrolyzes 7-methylguanosine monophosphate (m(7)GMP) to 7-methylguanosine and inorganic phosphate. The specific activity for m(7)GMP may protect cells against undesired salvage of m(7)GMP and its incorporation into nucleic acids. Also has weak activity for CMP. UMP and purine nucleotides are poor substrates. The polypeptide is 7-methylguanosine phosphate-specific 5'-nucleotidase A (Nt5c3b-a) (Xenopus laevis (African clawed frog)).